Here is a 334-residue protein sequence, read N- to C-terminus: 2,3-bisphosphoglycerate-dependent phosphoglycerate mutase 1 (334 aa).

Residues 1–48 constitute a chloroplast transit peptide; sequence MATATSHQSVVSFASLRSSPSSTISQCGFKIDSSLSFTSKKTNFCKIK. Substrate-binding positions include 84 to 91, 97 to 98, arginine 134, 188 to 191, lysine 199, 215 to 216, and 259 to 260; these read RHGESLWN, TG, ERMY, RR, and GN. Residue histidine 85 is the Tele-phosphohistidine intermediate of the active site. The active-site Proton donor/acceptor is glutamate 188.

The protein belongs to the phosphoglycerate mutase family. BPG-dependent PGAM subfamily.

It is found in the plastid. Its subcellular location is the chloroplast. The enzyme catalyses (2R)-2-phosphoglycerate = (2R)-3-phosphoglycerate. The protein operates within carbohydrate degradation; glycolysis; pyruvate from D-glyceraldehyde 3-phosphate: step 3/5. Its function is as follows. Catalyzes the interconversion of 2-phosphoglycerate and 3-phosphoglycerate. In Arabidopsis thaliana (Mouse-ear cress), this protein is 2,3-bisphosphoglycerate-dependent phosphoglycerate mutase 1.